The sequence spans 103 residues: Histone H4 (103 aa).

Positions 1 to 32 (MNTQSIGAKGKSKAAKGIAKRHRKQSSLSDSI) are disordered. A compositionally biased stretch (basic residues) spans 10 to 25 (GKSKAAKGIAKRHRKQ). K16 bears the N6-acetyl-N6-methyllysine; alternate mark. K16 carries the post-translational modification N6-methyllysine; alternate. Residues 20–24 (KRHRK) mediate DNA binding. K94 bears the N6-glutaryllysine mark.

Belongs to the histone H4 family. The nucleosome is a histone octamer containing two molecules each of H2A, H2B, H3 and H4 assembled in one H3-H4 heterotetramer and two H2A-H2B heterodimers. The octamer wraps approximately 147 bp of DNA. Post-translationally, glutarylation at Lys-94 (H4K91glu) destabilizes nucleosomes by promoting dissociation of the H2A-H2B dimers from nucleosomes.

The protein resides in the nucleus. It is found in the chromosome. In terms of biological role, core component of nucleosome. Nucleosomes wrap and compact DNA into chromatin, limiting DNA accessibility to the cellular machineries which require DNA as a template. Histones thereby play a central role in transcription regulation, DNA repair, DNA replication and chromosomal stability. DNA accessibility is regulated via a complex set of post-translational modifications of histones, also called histone code, and nucleosome remodeling. The polypeptide is Histone H4 (HHF1) (Encephalitozoon cuniculi (strain GB-M1) (Microsporidian parasite)).